An 867-amino-acid polypeptide reads, in one-letter code: Probable alpha,alpha-trehalose-phosphate synthase [UDP-forming] 9 (867 aa).

The residue at position 5 (Ser5) is a Phosphoserine. Thr32 carries the post-translational modification Phosphothreonine. The tract at residues 59–546 is glycosyltransferase; that stretch reads ERKIIVANML…AKSFMQDLER (488 aa).

It in the N-terminal section; belongs to the glycosyltransferase 20 family. The protein in the C-terminal section; belongs to the trehalose phosphatase family.

It carries out the reaction D-glucose 6-phosphate + UDP-alpha-D-glucose = alpha,alpha-trehalose 6-phosphate + UDP + H(+). This is Probable alpha,alpha-trehalose-phosphate synthase [UDP-forming] 9 (TPS9) from Arabidopsis thaliana (Mouse-ear cress).